The following is a 302-amino-acid chain: Formylmethanofuran--tetrahydromethanopterin formyltransferase (302 aa).

It belongs to the FTR family. As to quaternary structure, homotetramer.

It is found in the cytoplasm. It catalyses the reaction N-formylmethanofuran + 5,6,7,8-tetrahydromethanopterin + H(+) = N(5)-formyl-5,6,7,8-tetrahydromethanopterin + methanofuran. It functions in the pathway one-carbon metabolism; formaldehyde degradation; formate from formaldehyde (H(4)MPT route): step 4/5. Catalyzes the transfer of a formyl group from 5-formyl tetrahydromethanopterin (5-formyl-H(4)MPT) to methanofuran (MFR) to produce formylmethanofuran (formyl-MFR) and tetrahydromethanopterin (H(4)MPT). The polypeptide is Formylmethanofuran--tetrahydromethanopterin formyltransferase (Methylobacillus flagellatus (strain ATCC 51484 / DSM 6875 / VKM B-1610 / KT)).